A 264-amino-acid polypeptide reads, in one-letter code: uncharacterized protein (264 aa).

Residues histidine 5, histidine 7, glutamate 93, histidine 134, histidine 158, and aspartate 208 each contribute to the a divalent metal cation site.

The protein belongs to the metallo-dependent hydrolases superfamily. TatD-type hydrolase family. The cofactor is a divalent metal cation.

This is an uncharacterized protein from Mycobacterium tuberculosis (strain ATCC 25618 / H37Rv).